Consider the following 187-residue polypeptide: Transmembrane protein 17A (187 aa).

4 consecutive transmembrane segments (helical) span residues 49–69 (IFLY…VIML), 82–102 (FILV…LYLG), 114–134 (LAGF…FLLC), and 146–166 (AVHG…IFAL).

The protein belongs to the TMEM17 family. As to quaternary structure, part of the tectonic-like complex (also named B9 complex).

The protein localises to the cell projection. The protein resides in the cilium membrane. Functionally, transmembrane component of the tectonic-like complex, a complex localized at the transition zone of primary cilia and acting as a barrier that prevents diffusion of transmembrane proteins between the cilia and plasma membranes. Required for ciliogenesis and sonic hedgehog/SHH signaling. This is Transmembrane protein 17A (tmem17-a) from Xenopus tropicalis (Western clawed frog).